Here is a 453-residue protein sequence, read N- to C-terminus: Chromosomal replication initiator protein DnaA (453 aa).

The domain I, interacts with DnaA modulators stretch occupies residues 1 to 74 (MKEKQFWNRI…GFEIYDAEIT (74 aa)). The tract at residues 74–113 (TPHYIFTKPQDTTSSQVEEATNLTLYDYSPKLVSIPYSDT) is domain II. The interval 114–331 (GLKEKYTFDN…GAINDITLIA (218 aa)) is domain III, AAA+ region. Positions 158, 160, 161, and 162 each coordinate ATP. A domain IV, binds dsDNA region spans residues 332–453 (RVKKIKDITI…EIESIKKKIK (122 aa)).

The protein belongs to the DnaA family. In terms of assembly, oligomerizes as a right-handed, spiral filament on DNA at oriC.

It localises to the cytoplasm. Functionally, plays an essential role in the initiation and regulation of chromosomal replication. ATP-DnaA binds to the origin of replication (oriC) to initiate formation of the DNA replication initiation complex once per cell cycle. Binds the DnaA box (a 9 base pair repeat at the origin) and separates the double-stranded (ds)DNA. Forms a right-handed helical filament on oriC DNA; dsDNA binds to the exterior of the filament while single-stranded (ss)DNA is stabiized in the filament's interior. The ATP-DnaA-oriC complex binds and stabilizes one strand of the AT-rich DNA unwinding element (DUE), permitting loading of DNA polymerase. After initiation quickly degrades to an ADP-DnaA complex that is not apt for DNA replication. Binds acidic phospholipids. This is Chromosomal replication initiator protein DnaA from Streptococcus pneumoniae (strain Taiwan19F-14).